The primary structure comprises 1368 residues: DNA-directed RNA polymerase subunit beta (1368 aa).

The protein belongs to the RNA polymerase beta chain family. The RNAP catalytic core consists of 2 alpha, 1 beta, 1 beta' and 1 omega subunit. When a sigma factor is associated with the core the holoenzyme is formed, which can initiate transcription.

The enzyme catalyses RNA(n) + a ribonucleoside 5'-triphosphate = RNA(n+1) + diphosphate. DNA-dependent RNA polymerase catalyzes the transcription of DNA into RNA using the four ribonucleoside triphosphates as substrates. The polypeptide is DNA-directed RNA polymerase subunit beta (Legionella pneumophila (strain Corby)).